The sequence spans 23 residues: Potassium channel toxin kappa-KTx 2.3 (23 aa).

Intrachain disulfides connect Cys-4-Cys-22 and Cys-8-Cys-18.

It belongs to the short scorpion toxin superfamily. Potassium channel inhibitor kappa-KTx family. Kappa-KTx 2 subfamily. Expressed by the venom gland.

It localises to the secreted. Decreases the amplitude of the potassium current of the rat channels Kv1.1/KCNA1 by 33% and Kv1.2/KCNA2 by 8% as well as human Kv1.3/KCNA3 by 70%. The chain is Potassium channel toxin kappa-KTx 2.3 from Opisthacanthus madagascariensis (Scorpion).